Consider the following 27-residue polypeptide: Delta-conotoxin SuVIA (27 aa).

Intrachain disulfides connect C1/C17, C8/C21, and C16/C25.

It belongs to the conotoxin O1 superfamily. As to expression, expressed by the venom duct, in the proximal part (indicative of a defensive role).

Its subcellular location is the secreted. Its function is as follows. This toxin activates voltage-gated sodium channels (Nav1.3/SCN3A (EC(50)=3.98 nM), Nav1.4/SCN4A (EC(50)=4.99 nM), Nav1.6/SCN8A (EC(50)=1.27 nM) and Nav1.7/SCN9A (EC(50)=2.42 nM)). It shifts the voltage-dependence of activation to more hyperpolarized potentials but has only little effect on channel inactivation. In vivo, it induces nocifensive or pain-like behaviors in mice when injected intraplantarly. This is coherent with the specific defensive role deduced from its proximal position in the venom gland. In Conus suturatus (Sutured cone), this protein is Delta-conotoxin SuVIA.